The chain runs to 462 residues: tRNA modification GTPase MnmE (462 aa).

Residues arginine 34, glutamate 92, and lysine 131 each coordinate (6S)-5-formyl-5,6,7,8-tetrahydrofolate. A TrmE-type G domain is found at 227 to 386; the sequence is GLQVVIAGKP…LIDAITAHAG (160 aa). Residue asparagine 237 participates in K(+) binding. GTP contacts are provided by residues 237–242, 256–262, and 281–284; these read NAGKSS, TDIAGTT, and DTAG. Serine 241 lines the Mg(2+) pocket. 3 residues coordinate K(+): threonine 256, isoleucine 258, and threonine 261. Threonine 262 lines the Mg(2+) pocket. Lysine 462 is a (6S)-5-formyl-5,6,7,8-tetrahydrofolate binding site.

It belongs to the TRAFAC class TrmE-Era-EngA-EngB-Septin-like GTPase superfamily. TrmE GTPase family. As to quaternary structure, homodimer. Heterotetramer of two MnmE and two MnmG subunits. It depends on K(+) as a cofactor.

It localises to the cytoplasm. In terms of biological role, exhibits a very high intrinsic GTPase hydrolysis rate. Involved in the addition of a carboxymethylaminomethyl (cmnm) group at the wobble position (U34) of certain tRNAs, forming tRNA-cmnm(5)s(2)U34. This Acinetobacter baylyi (strain ATCC 33305 / BD413 / ADP1) protein is tRNA modification GTPase MnmE.